Consider the following 288-residue polypeptide: ATP phosphoribosyltransferase (288 aa).

The protein belongs to the ATP phosphoribosyltransferase family. Long subfamily. It depends on Mg(2+) as a cofactor.

Its subcellular location is the cytoplasm. The enzyme catalyses 1-(5-phospho-beta-D-ribosyl)-ATP + diphosphate = 5-phospho-alpha-D-ribose 1-diphosphate + ATP. It functions in the pathway amino-acid biosynthesis; L-histidine biosynthesis; L-histidine from 5-phospho-alpha-D-ribose 1-diphosphate: step 1/9. With respect to regulation, feedback inhibited by histidine. Catalyzes the condensation of ATP and 5-phosphoribose 1-diphosphate to form N'-(5'-phosphoribosyl)-ATP (PR-ATP). Has a crucial role in the pathway because the rate of histidine biosynthesis seems to be controlled primarily by regulation of HisG enzymatic activity. The polypeptide is ATP phosphoribosyltransferase (hisG) (Methanocaldococcus jannaschii (strain ATCC 43067 / DSM 2661 / JAL-1 / JCM 10045 / NBRC 100440) (Methanococcus jannaschii)).